A 37-amino-acid polypeptide reads, in one-letter code: Large ribosomal subunit protein bL36 (37 aa).

Belongs to the bacterial ribosomal protein bL36 family.

The chain is Large ribosomal subunit protein bL36 from Prochlorococcus marinus (strain MIT 9303).